The chain runs to 455 residues: Argininosuccinate synthase (455 aa).

ATP-binding positions include 17–25 (AFSGGLDTS) and alanine 43. Tyrosine 99 lines the L-citrulline pocket. ATP-binding residues include glycine 129 and threonine 131. Residues threonine 131, asparagine 135, and aspartate 136 each coordinate L-aspartate. Asparagine 135 serves as a coordination point for L-citrulline. Aspartate 136 contacts ATP. Arginine 139 and serine 192 together coordinate L-citrulline. Position 194 (aspartate 194) interacts with ATP. L-citrulline contacts are provided by threonine 201, glutamate 203, and glutamate 280. Positions 434 to 448 (TGLPQVDNNNLSSGR) are enriched in polar residues. The disordered stretch occupies residues 434–455 (TGLPQVDNNNLSSGRGLQDKRQ).

It belongs to the argininosuccinate synthase family. Type 2 subfamily. Homotetramer.

It localises to the cytoplasm. The catalysed reaction is L-citrulline + L-aspartate + ATP = 2-(N(omega)-L-arginino)succinate + AMP + diphosphate + H(+). It participates in amino-acid biosynthesis; L-arginine biosynthesis; L-arginine from L-ornithine and carbamoyl phosphate: step 2/3. This Yersinia pestis protein is Argininosuccinate synthase (argG).